The following is a 357-amino-acid chain: 3-isopropylmalate dehydrogenase (357 aa).

NAD(+) is bound at residue 75-88 (GPKWDTLPPAERPE). 4 residues coordinate substrate: Arg-96, Arg-106, Arg-134, and Asp-222. Mg(2+) contacts are provided by Asp-222, Asp-246, and Asp-250. NAD(+) is bound at residue 279–291 (GSAPDIAGQQKAN).

It belongs to the isocitrate and isopropylmalate dehydrogenases family. LeuB type 1 subfamily. As to quaternary structure, homodimer. Mg(2+) serves as cofactor. Requires Mn(2+) as cofactor.

It localises to the cytoplasm. The enzyme catalyses (2R,3S)-3-isopropylmalate + NAD(+) = 4-methyl-2-oxopentanoate + CO2 + NADH. It functions in the pathway amino-acid biosynthesis; L-leucine biosynthesis; L-leucine from 3-methyl-2-oxobutanoate: step 3/4. Catalyzes the oxidation of 3-carboxy-2-hydroxy-4-methylpentanoate (3-isopropylmalate) to 3-carboxy-4-methyl-2-oxopentanoate. The product decarboxylates to 4-methyl-2 oxopentanoate. The chain is 3-isopropylmalate dehydrogenase from Moorella thermoacetica (strain ATCC 39073 / JCM 9320).